The primary structure comprises 116 residues: Small ribosomal subunit protein eS24 (116 aa).

A disordered region spans residues 81–116 (IEPEHMVERHKKVLEELESESEESEESESEESEEEE). A compositionally biased stretch (acidic residues) spans 96-116 (ELESESEESEESESEESEEEE).

This sequence belongs to the eukaryotic ribosomal protein eS24 family.

The polypeptide is Small ribosomal subunit protein eS24 (Methanopyrus kandleri (strain AV19 / DSM 6324 / JCM 9639 / NBRC 100938)).